An 81-amino-acid chain; its full sequence is Antitoxin MT2731 (81 aa).

Its function is as follows. Antitoxin component of a type II toxin-antitoxin (TA) system. Neutralizes the effect of cognate toxin MT2730. The polypeptide is Antitoxin MT2731 (Mycobacterium tuberculosis (strain CDC 1551 / Oshkosh)).